We begin with the raw amino-acid sequence, 872 residues long: DNA mismatch repair protein MutS (872 aa).

602–609 (GPNMSGKS) serves as a coordination point for ATP.

It belongs to the DNA mismatch repair MutS family.

This protein is involved in the repair of mismatches in DNA. It is possible that it carries out the mismatch recognition step. This protein has a weak ATPase activity. This is DNA mismatch repair protein MutS from Staphylococcus aureus (strain Mu3 / ATCC 700698).